The sequence spans 307 residues: Murein tetrapeptide carboxypeptidase (307 aa).

Ser115 acts as the Nucleophile in catalysis. Residues Glu217 and His285 each act as charge relay system in the active site.

Belongs to the peptidase S66 family. In terms of assembly, homodimer.

It is found in the cytoplasm. It catalyses the reaction N-acetyl-D-glucosaminyl-N-acetylmuramoyl-L-alanyl-meso-2,6-diaminoheptanedioyl-D-alanine + H2O = N-acetyl-D-glucosaminyl-N-acetylmuramoyl-L-alanyl-meso-2,6-diaminoheptanedioate + D-alanine. It functions in the pathway cell wall biogenesis; peptidoglycan recycling. Its function is as follows. Releases the terminal D-alanine residue from the cytoplasmic disaccharide-tetrapeptide GlcNAc-MurNAc-L-Ala-gamma-D-Glu-meso-Dap-D-Ala, which is a murein turnover product. Probably also act on free tetrapetide. May be involved in murein recycling. This is Murein tetrapeptide carboxypeptidase from Pseudomonas aeruginosa (strain ATCC 15692 / DSM 22644 / CIP 104116 / JCM 14847 / LMG 12228 / 1C / PRS 101 / PAO1).